The chain runs to 1567 residues: ABC multidrug transporter MDR1 (1567 aa).

The segment covering 1–11 (MASQPPQPPSG) has biased composition (pro residues). Residues 1-37 (MASQPPQPPSGQPDTQYEEYQSEVITETTNRPTPAAD) form a disordered region. The span at 22 to 32 (SEVITETTNRP) shows a compositional bias: polar residues. 3 N-linked (GlcNAc...) asparagine glycosylation sites follow: N149, N157, and N356. An ABC transporter 1 domain is found at 167-432 (VQYQDTFLSP…FEEMGWYCPP (266 aa)). 6 helical membrane passes run 543-563 (STIA…SLFF), 571-591 (GFFA…LMSI), 636-656 (IPIK…LGGL), 661-681 (AKFF…SAIF), 691-711 (IPQA…YTGF), and 798-818 (LGIL…VSEL). N-linked (GlcNAc...) asparagine glycosylation is found at N819, N895, and N912. One can recognise an ABC transporter 2 domain in the interval 891 to 1134 (FTWRNVTYDI…LLNYFETHGA (244 aa)). 927-934 (GVSGAGKT) serves as a coordination point for ATP. Positions 1172 to 1202 (ESRHVQQELDRIQSETSKRNEGHGQSAEKEP) are disordered. The helical transmembrane segment at 1231–1251 (IWGKLLLGLTSALFIGFSFFL) threads the bilayer. A glycan (N-linked (GlcNAc...) asparagine) is linked at N1253. Helical transmembrane passes span 1257 to 1277 (AGLQ…SSLV), 1305 to 1325 (VFLL…GIIA), 1345 to 1365 (ILLL…QMII), 1372 to 1392 (ETAG…NGVL), and 1498 to 1518 (GIGW…YYLI).

The protein belongs to the ABC transporter superfamily. ABCG family. PDR (TC 3.A.1.205) subfamily.

It localises to the cell membrane. It carries out the reaction voriconazole(in) + ATP + H2O = voriconazole(out) + ADP + phosphate + H(+). The enzyme catalyses fluconazole(in) + ATP + H2O = fluconazole(out) + ADP + phosphate + H(+). It catalyses the reaction (R)-miconazole(in) + ATP + H2O = (R)-miconazole(out) + ADP + phosphate + H(+). The catalysed reaction is (S)-miconazole(in) + ATP + H2O = (S)-miconazole(out) + ADP + phosphate + H(+). In terms of biological role, pleiotropic ABC efflux transporter that may be involved in the modulation susceptibility to a wide range of unrelated cytotoxic compounds. In Trichophyton tonsurans (strain CBS 112818) (Scalp ringworm fungus), this protein is ABC multidrug transporter MDR1.